The following is a 235-amino-acid chain: Protein GrpE (235 aa).

Over residues 1 to 18 the composition is skewed to polar residues; that stretch reads MTDGNQKPDGNSGEQVTV. 2 disordered regions span residues 1–50 and 198–235; these read MTDG…DAAH and ESVD…PSGS. Basic and acidic residues predominate over residues 19–35; the sequence is TDKRRIDPETGEVRHVP. Positions 215–235 are enriched in polar residues; that stretch reads ADQGNSADTSGEQAESEPSGS.

The protein belongs to the GrpE family. In terms of assembly, homodimer.

The protein localises to the cytoplasm. Functionally, participates actively in the response to hyperosmotic and heat shock by preventing the aggregation of stress-denatured proteins, in association with DnaK and GrpE. It is the nucleotide exchange factor for DnaK and may function as a thermosensor. Unfolded proteins bind initially to DnaJ; upon interaction with the DnaJ-bound protein, DnaK hydrolyzes its bound ATP, resulting in the formation of a stable complex. GrpE releases ADP from DnaK; ATP binding to DnaK triggers the release of the substrate protein, thus completing the reaction cycle. Several rounds of ATP-dependent interactions between DnaJ, DnaK and GrpE are required for fully efficient folding. The chain is Protein GrpE from Mycobacterium tuberculosis (strain ATCC 25177 / H37Ra).